We begin with the raw amino-acid sequence, 97 residues long: Peptide YY-A (97 aa).

Residues 1–28 (MAVMLKPWTVVATVLICVLLCLGTFVDA) form the signal peptide. Residue Y64 is modified to Tyrosine amide. Residues 68–97 (STSEDVMAELLFGDDTEHKQRSRYDDSFMW) constitute a propeptide, C-terminal extension.

This sequence belongs to the NPY family. In terms of tissue distribution, mainly expressed in brainstem neurons, and in the telencephalon. Also expressed in intestinal endocrine cells.

It is found in the secreted. The protein is Peptide YY-A (pyya) of Danio rerio (Zebrafish).